A 223-amino-acid polypeptide reads, in one-letter code: Glutathione S-transferase 4 (223 aa).

Position 2 is a blocked amino end (Ala) (A2). A GST N-terminal domain is found at 4–85 (PAVKVYGWAI…HVLRKHKPEL (82 aa)). Glutathione contacts are provided by residues S14, 43–44 (HR), 56–57 (KV), and 69–70 (ES). One can recognise a GST C-terminal domain in the interval 90–223 (RLEQTAMVDV…VGAGAPKEQE (134 aa)).

Belongs to the GST superfamily. Phi family. In terms of assembly, homodimer or heterodimer of GST-I and GST-IV (=GST-II). As to expression, seedling roots.

It carries out the reaction RX + glutathione = an S-substituted glutathione + a halide anion + H(+). Its function is as follows. Conjugation of reduced glutathione to a wide number of exogenous and endogenous hydrophobic electrophiles. Involved in the detoxification of certain herbicides. Most active with substrates possessing a chloroacetamide structure. Trans-cinnamic acid and 1-chloro-2,4-dinitrobenzene are not effective substrates. May play an important role in the benoxacor-mediated protection of maize from metolachlor injury. This is Glutathione S-transferase 4 (GST4) from Zea mays (Maize).